The following is a 420-amino-acid chain: MEGYTTLPSTATLKPSPFTVSISESKLQTLQDLIRLSPIGPADYNNSSPSTGSKYGIRRDWLINAKKQWEDNFSWRTFEKKLKKYPQYTVPVKGESGETIEIHFIALFSQRQDARPLAFYHGWPSSPFDFLPILDLLTNKYTPETLPYHIIVPSLPGFCFSGSPPIDLDYDMPQAAYLLNNLMIGLGLDGYIAQGGDLGSGISREQAAGCEACKGFHLNMILLPPPANMKELTLEEVEKKAMPNALAFRQSGMAYALEHGTRGGTIGLALQASPVALLCWIGEKMMAWSDSSSQPSLEQILETVSLYWLTDSITRGLYPYRRFASGNEPKINFIEKPLGYSFFPNTYLPCPVSWAKTTANLVQYRRHESGGHFAPWERPRELLEDVEEYVDVAFGKKDSPMMGPKAVEDVSGSGSHARGL.

This sequence belongs to the peptidase S33 family.

It participates in mycotoxin biosynthesis. Its function is as follows. Putative epoxide hydrolase; part of the fragmented gene cluster that mediates the biosynthesis of dothistromin (DOTH), a polyketide toxin very similar in structure to the aflatoxin precursor, versicolorin B. The first step of the pathway is the conversion of acetate to norsolorinic acid (NOR) and requires the fatty acid synthase subunits hexA and hexB, as well as the polyketide synthase pksA. PksA combines a hexanoyl starter unit and 7 malonyl-CoA extender units to synthesize the precursor NOR. The hexanoyl starter unit is provided to the acyl-carrier protein (ACP) domain by the fungal fatty acid synthase hexA/hexB. The second step is the conversion of NOR to averantin (AVN) and requires the norsolorinic acid ketoreductase nor1, which catalyzes the dehydration of norsolorinic acid to form (1'S)-averantin. The cytochrome P450 monooxygenase avnA then catalyzes the hydroxylation of AVN to 5'hydroxyaverantin (HAVN). The next step is performed by adhA that transforms HAVN to averufin (AVF). Averufin might then be converted to hydroxyversicolorone by cypX and avfA. Hydroxyversicolorone is further converted versiconal hemiacetal acetate (VHA) by moxY. VHA is then the substrate for the versiconal hemiacetal acetate esterase est1 to yield versiconal (VAL). Versicolorin B synthase vbsA then converts VAL to versicolorin B (VERB) by closing the bisfuran ring. Then, the activity of the versicolorin B desaturase verB leads to versicolorin A (VERA). DotB, a predicted chloroperoxidase, may perform epoxidation of the A-ring of VERA. Alternatively, a cytochrome P450, such as cypX or avnA could catalyze this step. It is also possible that another, uncharacterized, cytochrome P450 enzyme is responsible for this step. Opening of the epoxide could potentially be achieved by the epoxide hydrolase epoA. However, epoA seems not to be required for DOTH biosynthesis, but other epoxide hydrolases may have the ability to complement this hydrolysis. Alternatively, opening of the epoxide ring could be achieved non-enzymatically. The next step is the deoxygenation of ring A to yield the 5,8-dihydroxyanthraquinone which is most likely catalyzed by the NADPH dehydrogenase encoded by ver1. The last stages of DOTH biosynthesis are proposed to involve hydroxylation of the bisfuran. OrdB and norB might have oxidative roles here. An alternative possibility is that cytochrome P450 monoogenases such as avnA and cypX might perform these steps in addition to previously proposed steps. The chain is Putative epoxide hydrolase from Dothistroma septosporum (Red band needle blight fungus).